We begin with the raw amino-acid sequence, 846 residues long: Rho GTPase-activating protein 12 (846 aa).

An SH3 domain is found at 12 to 74; sequence PGQVYIEVEY…PAQYVKEVTR (63 aa). Residues 152–175 are compositionally biased toward polar residues; it reads LTHNNGKFNNDSHSPKVSSQNRTR. A disordered region spans residues 152–241; it reads LTHNNGKFNN…PPNQGRPDSP (90 aa). A phosphoserine mark is found at Ser165 and Ser176. Polar residues predominate over residues 191–200; sequence TSFSQEQSCD. 3 positions are modified to phosphoserine: Ser201, Ser213, and Ser215. The segment covering 224–234 has biased composition (polar residues); sequence TEQIRATTPPN. Phosphothreonine is present on residues Thr230 and Thr231. Ser240 carries the post-translational modification Phosphoserine. Residue Tyr243 is modified to Phosphotyrosine. 2 consecutive WW domains span residues 265-298 and 358-391; these read IQIN…PPRW and DYTN…LPKY. The disordered stretch occupies residues 293-316; it reads WKPPRWTRDASISKGDFQNPGDQE. Disordered stretches follow at residues 428–466 and 580–629; these read DTND…DQEK and ETDE…TKKN. Residues 445-461 are compositionally biased toward polar residues; that stretch reads NESSPSSPKHQDTASSP. The 113-residue stretch at 463–575 folds into the PH domain; it reads DQEKYGLLNV…WFKVLSSTIN (113 aa). Residues 580–590 show a composition bias toward acidic residues; sequence ETDEGIEEEIP. Phosphoserine is present on Ser592. The segment covering 594–609 has biased composition (basic and acidic residues); the sequence is GIEKHDKEKEQKDPKK. The region spanning 656–844 is the Rho-GAP domain; it reads SNLANLCQRE…LILLELSSIF (189 aa).

Functionally, GTPase activator for the Rho-type GTPases by converting them to an inactive GDP-bound state. The chain is Rho GTPase-activating protein 12 (ARHGAP12) from Homo sapiens (Human).